A 261-amino-acid polypeptide reads, in one-letter code: Cell division protein B (261 aa).

The tract at residues 213–261 (SEDMILNYIKTTGGFIDVDYIAKNFDVSKDEVFNVLRRLEEKGLIVLEG) is winged-helix-like fold.

Interacts with CdvA. Interacts with CdvC.

It localises to the cytoplasm. The protein resides in the nucleoid. In terms of biological role, part of a cell division machinery. The CdvA, CdvB and CdvC proteins polymerize between segregating nucleoids and persist throughout cell division, forming a successively smaller structure during constriction. In Sulfolobus acidocaldarius (strain ATCC 33909 / DSM 639 / JCM 8929 / NBRC 15157 / NCIMB 11770), this protein is Cell division protein B.